The primary structure comprises 304 residues: Glycine--tRNA ligase alpha subunit (304 aa).

It belongs to the class-II aminoacyl-tRNA synthetase family. As to quaternary structure, tetramer of two alpha and two beta subunits.

Its subcellular location is the cytoplasm. It carries out the reaction tRNA(Gly) + glycine + ATP = glycyl-tRNA(Gly) + AMP + diphosphate. The polypeptide is Glycine--tRNA ligase alpha subunit (Serratia proteamaculans (strain 568)).